Consider the following 251-residue polypeptide: Phosphate import ATP-binding protein PstB 2 (251 aa).

The region spanning 5-246 (ISAKDVHLSY…PKKQITSDYL (242 aa)) is the ABC transporter domain. 37 to 44 (GPSGCGKS) provides a ligand contact to ATP.

It belongs to the ABC transporter superfamily. Phosphate importer (TC 3.A.1.7) family. As to quaternary structure, the complex is composed of two ATP-binding proteins (PstB), two transmembrane proteins (PstC and PstA) and a solute-binding protein (PstS).

It is found in the cell membrane. It carries out the reaction phosphate(out) + ATP + H2O = ADP + 2 phosphate(in) + H(+). Part of the ABC transporter complex PstSACB involved in phosphate import. Responsible for energy coupling to the transport system. The polypeptide is Phosphate import ATP-binding protein PstB 2 (Lactobacillus acidophilus (strain ATCC 700396 / NCK56 / N2 / NCFM)).